Consider the following 317-residue polypeptide: Apolipoprotein E (317 aa).

The signal sequence occupies residues 1–18 (MKVLWAALLVTFLAGCQA). Repeat copies occupy residues 80–101 (TLMDETMKELKAYKSELEEQLS), 102–123 (PVAEETRARLSKELQAAQARLG), 124–145 (ADMEDVRSRLVQYRSEVQAMLG), 146–167 (QSTEELRARLASHLRKLRKRLL), 168–189 (RDADDLQKRLAVYQAGAREGAE), 190–211 (RGVSAIRERLGPLVEQGRVRAA), 212–233 (TVGSLASQPLQERAQALGERLR), and 234–255 (ARMEEMGSRTRDRLDEVKEQVA). An 8 X 22 AA approximate tandem repeats region spans residues 80-255 (TLMDETMKEL…RLDEVKEQVA (176 aa)). At M143 the chain carries Methionine sulfoxide. S147 carries the phosphoserine modification. An LDL and other lipoprotein receptors binding region spans residues 158–168 (HLRKLRKRLLR). Residue 162 to 165 (LRKR) participates in heparin binding. Residues 210–290 (AATVGSLASQ…SWFEPLVEDM (81 aa)) are lipid-binding and lipoprotein association. The O-linked (GalNAc...) threonine glycan is linked to T212. Residue 229 to 236 (GERLRARM) participates in heparin binding. The homooligomerization stretch occupies residues 266–317 (QQISLQAEAFQARLKSWFEPLVEDMQRQWAGLVEKVQAAVGASTAPVPSDNH). The segment at 278–290 (RLKSWFEPLVEDM) is specificity for association with VLDL.

The protein belongs to the apolipoprotein A1/A4/E family. As to quaternary structure, homotetramer. May interact with ABCA1; functionally associated with ABCA1 in the biogenesis of HDLs. May interact with APP/A4 amyloid-beta peptide; the interaction is extremely stable in vitro but its physiological significance is unclear. May interact with MAPT. May interact with MAP2. In the cerebrospinal fluid, interacts with secreted SORL1. Interacts with PMEL; this allows the loading of PMEL luminal fragment on ILVs to induce fibril nucleation. APOE exists as multiple glycosylated and sialylated glycoforms within cells and in plasma. The extent of glycosylation and sialylation are tissue and context specific. Post-translationally, glycated in plasma VLDL. In terms of processing, phosphorylated by FAM20C in the extracellular medium.

The protein localises to the secreted. Its subcellular location is the extracellular space. It is found in the extracellular matrix. It localises to the extracellular vesicle. The protein resides in the endosome. The protein localises to the multivesicular body. APOE is an apolipoprotein, a protein associating with lipid particles, that mainly functions in lipoprotein-mediated lipid transport between organs via the plasma and interstitial fluids. APOE is a core component of plasma lipoproteins and is involved in their production, conversion and clearance. Apolipoproteins are amphipathic molecules that interact both with lipids of the lipoprotein particle core and the aqueous environment of the plasma. As such, APOE associates with chylomicrons, chylomicron remnants, very low density lipoproteins (VLDL) and intermediate density lipoproteins (IDL) but shows a preferential binding to high-density lipoproteins (HDL). It also binds a wide range of cellular receptors including the LDL receptor/LDLR, the LDL receptor-related proteins LRP1, LRP2 and LRP8 and the very low-density lipoprotein receptor/VLDLR that mediate the cellular uptake of the APOE-containing lipoprotein particles. Finally, APOE also has a heparin-binding activity and binds heparan-sulfate proteoglycans on the surface of cells, a property that supports the capture and the receptor-mediated uptake of APOE-containing lipoproteins by cells. A main function of APOE is to mediate lipoprotein clearance through the uptake of chylomicrons, VLDLs, and HDLs by hepatocytes. APOE is also involved in the biosynthesis by the liver of VLDLs as well as their uptake by peripheral tissues ensuring the delivery of triglycerides and energy storage in muscle, heart and adipose tissues. By participating in the lipoprotein-mediated distribution of lipids among tissues, APOE plays a critical role in plasma and tissues lipid homeostasis. APOE is also involved in two steps of reverse cholesterol transport, the HDLs-mediated transport of cholesterol from peripheral tissues to the liver, and thereby plays an important role in cholesterol homeostasis. First, it is functionally associated with ABCA1 in the biogenesis of HDLs in tissues. Second, it is enriched in circulating HDLs and mediates their uptake by hepatocytes. APOE also plays an important role in lipid transport in the central nervous system, regulating neuron survival and sprouting. This Macaca nemestrina (Pig-tailed macaque) protein is Apolipoprotein E (APOE).